The sequence spans 145 residues: D-aminoacyl-tRNA deacylase (145 aa).

Positions 137–138 (GP) match the Gly-cisPro motif, important for rejection of L-amino acids motif.

The protein belongs to the DTD family. As to quaternary structure, homodimer.

The protein localises to the cytoplasm. It carries out the reaction glycyl-tRNA(Ala) + H2O = tRNA(Ala) + glycine + H(+). The catalysed reaction is a D-aminoacyl-tRNA + H2O = a tRNA + a D-alpha-amino acid + H(+). Its function is as follows. An aminoacyl-tRNA editing enzyme that deacylates mischarged D-aminoacyl-tRNAs. Also deacylates mischarged glycyl-tRNA(Ala), protecting cells against glycine mischarging by AlaRS. Acts via tRNA-based rather than protein-based catalysis; rejects L-amino acids rather than detecting D-amino acids in the active site. By recycling D-aminoacyl-tRNA to D-amino acids and free tRNA molecules, this enzyme counteracts the toxicity associated with the formation of D-aminoacyl-tRNA entities in vivo and helps enforce protein L-homochirality. The chain is D-aminoacyl-tRNA deacylase from Pseudomonas syringae pv. tomato (strain ATCC BAA-871 / DC3000).